Consider the following 261-residue polypeptide: Protein FAM78B (261 aa).

This sequence belongs to the FAM78 family.

This chain is Protein FAM78B (FAM78B), found in Homo sapiens (Human).